Here is a 488-residue protein sequence, read N- to C-terminus: Glutamyl-tRNA(Gln) amidotransferase subunit B, mitochondrial (488 aa).

Belongs to the GatB/GatE family. GatB subfamily. In terms of assembly, subunit of the heterotrimeric GatFAB amidotransferase (AdT) complex, composed of A, B and F subunits.

The protein resides in the mitochondrion. It catalyses the reaction L-glutamyl-tRNA(Gln) + L-glutamine + ATP + H2O = L-glutaminyl-tRNA(Gln) + L-glutamate + ADP + phosphate + H(+). Its function is as follows. Allows the formation of correctly charged Gln-tRNA(Gln) through the transamidation of misacylated Glu-tRNA(Gln) in the mitochondria. The reaction takes place in the presence of glutamine and ATP through an activated gamma-phospho-Glu-tRNA(Gln). The chain is Glutamyl-tRNA(Gln) amidotransferase subunit B, mitochondrial from Candida albicans (strain WO-1) (Yeast).